The chain runs to 1164 residues: Toxin subunit YenA1 (1164 aa).

Residues 106–131 (RLEKSNSPLVPQTSSSTDASSESQTN) form a disordered region. The span at 118 to 130 (TSSSTDASSESQT) shows a compositional bias: low complexity.

Semipurified toxin complex consists of at least YenA1, YenA2, YenB, YenC1, YenC2, Chi1 and Chi2. The Yen-TC:K9 subcomplex is about 26 nm tall and 22 nm in diameter with 5-fold symmetry and 5 copies of YenA1, YenA2, Chi1 and Chi2; the chitinase subunits may be solvent accessible on the exterior the complex. The Yen-TC:K9 subcomplex has no insecticidal activity. The native complex with additional YenB, YenC1 and YenC2 subunits is 16 nm taller and is insecticidal; the toxicity-conferring subunits are present at about 1 copy each.

Its subcellular location is the secreted. With respect to regulation, toxin complex is secreted when grown at 25 degrees Celsius or less; at higher temperatures the proteins are present intracellularly but not secreted. Functionally, part of an orally active toxin complex (TC) with strong insecticidal effects on larvae of the Coleoptera Costelytra zealandica, Acrossidius tasmania and Adoryphorus couloni and some Lepidoptera larvae. The TC has an endochitinase activity. The chain is Toxin subunit YenA1 from Yersinia entomophaga.